A 62-amino-acid chain; its full sequence is Large ribosomal subunit protein bL28 (62 aa).

This sequence belongs to the bacterial ribosomal protein bL28 family.

The chain is Large ribosomal subunit protein bL28 from Koribacter versatilis (strain Ellin345).